Here is a 156-residue protein sequence, read N- to C-terminus: Small ribosomal subunit protein uS7 (156 aa).

The protein belongs to the universal ribosomal protein uS7 family. Part of the 30S ribosomal subunit. Contacts proteins S9 and S11.

In terms of biological role, one of the primary rRNA binding proteins, it binds directly to 16S rRNA where it nucleates assembly of the head domain of the 30S subunit. Is located at the subunit interface close to the decoding center, probably blocks exit of the E-site tRNA. The protein is Small ribosomal subunit protein uS7 of Rhodospirillum rubrum (strain ATCC 11170 / ATH 1.1.1 / DSM 467 / LMG 4362 / NCIMB 8255 / S1).